The following is a 383-amino-acid chain: Pheromone-regulated membrane protein 10 (383 aa).

The Cytoplasmic portion of the chain corresponds to 1-65; it reads MIVSFGDATT…ILADTNLYPP (65 aa). The helical transmembrane segment at 66–86 threads the bilayer; it reads WMCVLLYAFCSAMVTPYAFGG. A topological domain (extracellular) is located at residue D87. A helical membrane pass occupies residues 88 to 108; that stretch reads WVNLAISFFMGLCVGSLQFIL. The Cytoplasmic portion of the chain corresponds to 109-117; sequence SQKSYMYSN. The helical transmembrane segment at 118-138 threads the bilayer; the sequence is VFEISASIVVSFCGRAFGSIP. Residues 139–141 are Extracellular-facing; sequence RSH. Residues 142–162 form a helical membrane-spanning segment; that stretch reads ICFGAVTQGSLALILPGYIIL. Over 163-180 the chain is Cytoplasmic; that stretch reads CGALELQSRSLVAGAVRM. The helical transmembrane segment at 181–201 threads the bilayer; it reads FYAIIYSLFLGFGITLGSALF. Residues 202 to 216 are Extracellular-facing; the sequence is GWMYHNATNEISCPQ. Residues 217-237 traverse the membrane as a helical segment; it reads LISPWFRFLFVPAFTISISLL. Residues 238–241 are Cytoplasmic-facing; sequence NQAH. Residues 242 to 262 form a helical membrane-spanning segment; it reads ISQLPVMVFISCTGYVVTYWA. The Extracellular portion of the chain corresponds to 263–271; that stretch reads GKHFANSTE. A helical membrane pass occupies residues 272–292; it reads FTAALAAFVIGVLGNLYSRIW. Residue K293 is a topological domain, cytoplasmic. The chain crosses the membrane as a helical span at residues 294–314; the sequence is GLAVSAMLPAIFVQVPSGIAS. Residues 315 to 352 are Extracellular-facing; it reads QNSLLSGLQSANTIVNANETITTSTSDPSSSMSFGMTM. The chain crosses the membrane as a helical span at residues 353–373; the sequence is IQVCVGISVGLFASSLFVYPF. Residues 374–383 are Cytoplasmic-facing; the sequence is GKKKTGLFSL.

Belongs to the ThrE exporter (TC 2.A.79) family.

The protein localises to the membrane. The chain is Pheromone-regulated membrane protein 10 (PRM10) from Saccharomyces cerevisiae (strain ATCC 204508 / S288c) (Baker's yeast).